The sequence spans 225 residues: Uracil-DNA glycosylase (225 aa).

Asp65 acts as the Proton acceptor in catalysis.

This sequence belongs to the uracil-DNA glycosylase (UDG) superfamily. UNG family.

Its subcellular location is the cytoplasm. It catalyses the reaction Hydrolyzes single-stranded DNA or mismatched double-stranded DNA and polynucleotides, releasing free uracil.. Functionally, excises uracil residues from the DNA which can arise as a result of misincorporation of dUMP residues by DNA polymerase or due to deamination of cytosine. This Bacillus licheniformis (strain ATCC 14580 / DSM 13 / JCM 2505 / CCUG 7422 / NBRC 12200 / NCIMB 9375 / NCTC 10341 / NRRL NRS-1264 / Gibson 46) protein is Uracil-DNA glycosylase.